The chain runs to 217 residues: Elongation factor Ts (217 aa).

The segment at 80 to 83 (TDFV) is involved in Mg(2+) ion dislocation from EF-Tu.

Belongs to the EF-Ts family.

Its subcellular location is the cytoplasm. Functionally, associates with the EF-Tu.GDP complex and induces the exchange of GDP to GTP. It remains bound to the aminoacyl-tRNA.EF-Tu.GTP complex up to the GTP hydrolysis stage on the ribosome. This is Elongation factor Ts from Carboxydothermus hydrogenoformans (strain ATCC BAA-161 / DSM 6008 / Z-2901).